Consider the following 205-residue polypeptide: N-(5'-phosphoribosyl)anthranilate isomerase (205 aa).

The protein belongs to the TrpF family.

It carries out the reaction N-(5-phospho-beta-D-ribosyl)anthranilate = 1-(2-carboxyphenylamino)-1-deoxy-D-ribulose 5-phosphate. Its pathway is amino-acid biosynthesis; L-tryptophan biosynthesis; L-tryptophan from chorismate: step 3/5. In Thermotoga petrophila (strain ATCC BAA-488 / DSM 13995 / JCM 10881 / RKU-1), this protein is N-(5'-phosphoribosyl)anthranilate isomerase.